A 94-amino-acid polypeptide reads, in one-letter code: Co-chaperonin GroES (94 aa).

It belongs to the GroES chaperonin family. As to quaternary structure, heptamer of 7 subunits arranged in a ring. Interacts with the chaperonin GroEL.

It localises to the cytoplasm. Its function is as follows. Together with the chaperonin GroEL, plays an essential role in assisting protein folding. The GroEL-GroES system forms a nano-cage that allows encapsulation of the non-native substrate proteins and provides a physical environment optimized to promote and accelerate protein folding. GroES binds to the apical surface of the GroEL ring, thereby capping the opening of the GroEL channel. This is Co-chaperonin GroES from Staphylococcus carnosus (strain TM300).